The primary structure comprises 1367 residues: Insulin-like growth factor 1 receptor (1367 aa).

The signal sequence occupies residues 1–30 (MKSGSGGGSPTSLWGLLFLSAALSLWPTSG). Cys-33 and Cys-52 are oxidised to a cystine. N-linked (GlcNAc...) asparagine glycans are attached at residues Asn-51, Asn-102, and Asn-135. 13 disulfide bridges follow: Cys-150–Cys-178, Cys-182–Cys-205, Cys-192–Cys-211, Cys-215–Cys-224, Cys-219–Cys-230, Cys-231–Cys-239, Cys-235–Cys-248, Cys-251–Cys-260, Cys-264–Cys-276, Cys-282–Cys-303, Cys-307–Cys-321, Cys-324–Cys-328, and Cys-332–Cys-353. N-linked (GlcNAc...) asparagine glycosylation is present at Asn-244. A glycan (N-linked (GlcNAc...) asparagine) is linked at Asn-314. 2 N-linked (GlcNAc...) asparagine glycosylation sites follow: Asn-417 and Asn-438. Cysteines 455 and 488 form a disulfide. 4 Fibronectin type-III domains span residues 491–609 (DVLH…TNAS), 610–708 (VPSI…TEAE), 735–828 (PERK…TMPA), and 834–927 (IPGP…VQAK). 9 N-linked (GlcNAc...) asparagine glycosylation sites follow: Asn-534, Asn-607, Asn-622, Asn-640, Asn-747, Asn-756, Asn-764, Asn-900, and Asn-913. Over 741-935 (DVMQVANTTM…AKTGYENFIH (195 aa)) the chain is Extracellular. A helical transmembrane segment spans residues 936–959 (LIIALPVAVLLIVGGLVIMLYVFH). Residues 960–1367 (RKRNNSRLGN…ALPLPQSSTC (408 aa)) lie on the Cytoplasmic side of the membrane. Positions 977 to 980 (NPEY) match the IRS1- and SHC1-binding motif. Tyr-980 is modified (phosphotyrosine). The Protein kinase domain maps to 999–1274 (ITMSRELGQG…SIKEEMEPGF (276 aa)). Residues 1005–1013 (LGQGSFGMV) and Lys-1033 contribute to the ATP site. The Proton acceptor role is filled by Asp-1135. 3 positions are modified to phosphotyrosine; by autocatalysis: Tyr-1161, Tyr-1165, and Tyr-1166. Residues Lys-1168 and Lys-1171 each participate in a glycyl lysine isopeptide (Lys-Gly) (interchain with G-Cter in ubiquitin) cross-link. Position 1278 is a phosphoserine; by GSK3-beta (Ser-1278). Ser-1282 bears the Phosphoserine mark. Positions 1288 to 1367 (PEPEELDLEP…ALPLPQSSTC (80 aa)) are disordered. Positions 1290–1299 (PEELDLEPEN) are enriched in acidic residues. A compositionally biased stretch (low complexity) spans 1300 to 1316 (MESVPLDPSASSSSLPL). Positions 1317–1326 (PDRHSGHKAE) are enriched in basic and acidic residues.

Belongs to the protein kinase superfamily. Tyr protein kinase family. Insulin receptor subfamily. Tetramer of 2 alpha and 2 beta chains linked by disulfide bonds. The alpha chains contribute to the formation of the ligand-binding domain, while the beta chain carries the kinase domain. Interacts with PIK3R1 and with the PTB/PID domains of IRS1 and SHC1 in vitro when autophosphorylated on tyrosine residues. Forms a hybrid receptor with INSR, the hybrid is a tetramer consisting of 1 alpha chain and 1 beta chain of INSR and 1 alpha chain and 1 beta chain of IGF1R. Interacts with ARRB1 and ARRB2. Interacts with GRB10. Interacts with RACK1. Interacts with SOCS1, SOCS2 and SOCS3. Interacts with 14-3-3 proteins. Interacts with NMD2. Interacts with MAP3K5. Interacts with STAT3. Found in a ternary complex with IGF1 and ITGAV:ITGB3 or ITGA6:ITGB4. Interacts (nascent precursor form) with ZFAND2B. As to quaternary structure, (Microbial infection) Interacts with human respiratory syncytial virus (HRSV) fusion glycoprotein F1/F2 heterodimer. Autophosphorylated on tyrosine residues in response to ligand binding. Autophosphorylation occurs in trans, i.e. one subunit of the dimeric receptor phosphorylates tyrosine residues on the other subunit. Autophosphorylation occurs in a sequential manner; Tyr-1165 is predominantly phosphorylated first, followed by phosphorylation of Tyr-1161 and Tyr-1166. While every single phosphorylation increases kinase activity, all three tyrosine residues in the kinase activation loop (Tyr-1165, Tyr-1161 and Tyr-1166) have to be phosphorylated for optimal activity. Can be autophosphorylated at additional tyrosine residues (in vitro). Autophosphorylated is followed by phosphorylation of juxtamembrane tyrosines and C-terminal serines. May also be phosphorylated at Tyr-1161 and Tyr-1166 by mTORC2. Phosphorylation of Tyr-980 is required for IRS1- and SHC1-binding. Phosphorylation of Ser-1278 by GSK-3beta restrains kinase activity and promotes cell surface expression, it requires a priming phosphorylation at Ser-1282. Dephosphorylated by PTPN1. Post-translationally, polyubiquitinated at Lys-1168 and Lys-1171 through both 'Lys-48' and 'Lys-29' linkages, promoting receptor endocytosis and subsequent degradation by the proteasome. Ubiquitination is facilitated by pre-existing phosphorylation. In terms of processing, sumoylated with SUMO1. Controlled by regulated intramembrane proteolysis (RIP). Undergoes metalloprotease-dependent constitutive ectodomain shedding to produce a membrane-anchored 52 kDa C-Terminal fragment which is further processed by presenilin gamma-secretase to yield an intracellular 50 kDa fragment. As to expression, found as a hybrid receptor with INSR in muscle, heart, kidney, adipose tissue, skeletal muscle, hepatoma, fibroblasts, spleen and placenta (at protein level). Expressed in a variety of tissues. Overexpressed in tumors, including melanomas, cancers of the colon, pancreas prostate and kidney.

It is found in the cell membrane. It carries out the reaction L-tyrosyl-[protein] + ATP = O-phospho-L-tyrosyl-[protein] + ADP + H(+). With respect to regulation, activated by autophosphorylation at Tyr-1165, Tyr-1161 and Tyr-1166 on the kinase activation loop; phosphorylation at all three tyrosine residues is required for optimal kinase activity. Inhibited by MSC1609119A-1, BMS-754807, PQIP, benzimidazole pyridinone, isoquinolinedione, bis-azaindole, 3-cyanoquinoline, 2,4-bis-arylamino-1,3-pyrimidine, pyrrolopyrimidine, pyrrole-5-carboxaldehyde, picropodophyllin (PPP), tyrphostin derivatives. While most inhibitors bind to the ATP binding pocket, MSC1609119A-1 functions as allosteric inhibitor and binds close to the DFG motif and the activation loop. In terms of biological role, receptor tyrosine kinase which mediates actions of insulin-like growth factor 1 (IGF1). Binds IGF1 with high affinity and IGF2 and insulin (INS) with a lower affinity. The activated IGF1R is involved in cell growth and survival control. IGF1R is crucial for tumor transformation and survival of malignant cell. Ligand binding activates the receptor kinase, leading to receptor autophosphorylation, and tyrosines phosphorylation of multiple substrates, that function as signaling adapter proteins including, the insulin-receptor substrates (IRS1/2), Shc and 14-3-3 proteins. Phosphorylation of IRSs proteins lead to the activation of two main signaling pathways: the PI3K-AKT/PKB pathway and the Ras-MAPK pathway. The result of activating the MAPK pathway is increased cellular proliferation, whereas activating the PI3K pathway inhibits apoptosis and stimulates protein synthesis. Phosphorylated IRS1 can activate the 85 kDa regulatory subunit of PI3K (PIK3R1), leading to activation of several downstream substrates, including protein AKT/PKB. AKT phosphorylation, in turn, enhances protein synthesis through mTOR activation and triggers the antiapoptotic effects of IGFIR through phosphorylation and inactivation of BAD. In parallel to PI3K-driven signaling, recruitment of Grb2/SOS by phosphorylated IRS1 or Shc leads to recruitment of Ras and activation of the ras-MAPK pathway. In addition to these two main signaling pathways IGF1R signals also through the Janus kinase/signal transducer and activator of transcription pathway (JAK/STAT). Phosphorylation of JAK proteins can lead to phosphorylation/activation of signal transducers and activators of transcription (STAT) proteins. In particular activation of STAT3, may be essential for the transforming activity of IGF1R. The JAK/STAT pathway activates gene transcription and may be responsible for the transforming activity. JNK kinases can also be activated by the IGF1R. IGF1 exerts inhibiting activities on JNK activation via phosphorylation and inhibition of MAP3K5/ASK1, which is able to directly associate with the IGF1R. Functionally, when present in a hybrid receptor with INSR, binds IGF1. PubMed:12138094 shows that hybrid receptors composed of IGF1R and INSR isoform Long are activated with a high affinity by IGF1, with low affinity by IGF2 and not significantly activated by insulin, and that hybrid receptors composed of IGF1R and INSR isoform Short are activated by IGF1, IGF2 and insulin. In contrast, PubMed:16831875 shows that hybrid receptors composed of IGF1R and INSR isoform Long and hybrid receptors composed of IGF1R and INSR isoform Short have similar binding characteristics, both bind IGF1 and have a low affinity for insulin. The sequence is that of Insulin-like growth factor 1 receptor (IGF1R) from Homo sapiens (Human).